Consider the following 222-residue polypeptide: UPF0502 protein Shewmr7_1629 (222 aa).

It belongs to the UPF0502 family.

This chain is UPF0502 protein Shewmr7_1629, found in Shewanella sp. (strain MR-7).